Reading from the N-terminus, the 154-residue chain is Aspartate carbamoyltransferase regulatory chain (154 aa).

Cys-109, Cys-114, Cys-138, and Cys-141 together coordinate Zn(2+).

The protein belongs to the PyrI family. Contains catalytic and regulatory chains. Zn(2+) is required as a cofactor.

In terms of biological role, involved in allosteric regulation of aspartate carbamoyltransferase. In Aliivibrio fischeri (strain ATCC 700601 / ES114) (Vibrio fischeri), this protein is Aspartate carbamoyltransferase regulatory chain.